The following is a 154-amino-acid chain: Transcriptional repressor NrdR (154 aa).

A zinc finger spans residues 3–34 (CPFCSHNDSKVIDSRPTDEGQAIRRRRECISC). The ATP-cone domain occupies 49-139 (LIVVKKNGNR…VYREFKDINT (91 aa)).

It belongs to the NrdR family. The cofactor is Zn(2+).

Functionally, negatively regulates transcription of bacterial ribonucleotide reductase nrd genes and operons by binding to NrdR-boxes. The protein is Transcriptional repressor NrdR of Alkaliphilus oremlandii (strain OhILAs) (Clostridium oremlandii (strain OhILAs)).